Reading from the N-terminus, the 165-residue chain is RNA polymerase II transcriptional coactivator KELP (165 aa).

The DEK-C domain maps to K3–D60. The tract at residues E66–D93 is disordered.

It belongs to the transcriptional coactivator PC4 family.

It localises to the nucleus. General coactivator that functions cooperatively with TAFs and mediates functional interactions between upstream activators and the general transcriptional machinery. Binds single-stranded DNA. This chain is RNA polymerase II transcriptional coactivator KELP (KELP), found in Arabidopsis thaliana (Mouse-ear cress).